The following is a 279-amino-acid chain: MREFEAHGATASPGVVTNFLGVRIPSDIMPSILKSLEGQKEGFPIPGNWHADIAEWAAALLSVREAKTSYRILEVGCGWGCWLSNMGVAAKARGLKIDLIGVEGDQQNIEHAKHTLALNGIEAHEFQLTNGVASARNGVALFPILDGPGEVWGAEPIFHPDAETISKARAAGSHTELKCYTLDDLSHGKPIDLLHVDIQGSELDFVKGNFDEISTLVKRILIGTHSRYLEGSLQKFLLDQGWALEMDRPAICTNVAGKPQIAVDGVLLFRSPTMPHPVF.

This chain is Putative methyltransferase Jann_4284, found in Jannaschia sp. (strain CCS1).